A 397-amino-acid chain; its full sequence is Phosphonopyruvate decarboxylase (397 aa).

This sequence belongs to the TPP enzyme family. It depends on thiamine diphosphate as a cofactor. The cofactor is Mg(2+).

It carries out the reaction 3-phosphonopyruvate + H(+) = phosphonoacetaldehyde + CO2. Its pathway is secondary metabolite biosynthesis; bialaphos biosynthesis. In terms of biological role, involved in the biosynthesis of phosphinothricin tripeptide (PTT), also known as bialaphos (BA), a natural-product antibiotic and potent herbicide. Catalyzes the decarboxylation of phosphonopyruvate (PnPy) to generate phosphonoacetaldehyde (PnAA). This chain is Phosphonopyruvate decarboxylase, found in Streptomyces viridochromogenes (strain DSM 40736 / JCM 4977 / BCRC 1201 / Tue 494).